A 560-amino-acid polypeptide reads, in one-letter code: 2-succinyl-5-enolpyruvyl-6-hydroxy-3-cyclohexene-1-carboxylate synthase (560 aa).

The protein belongs to the TPP enzyme family. MenD subfamily. In terms of assembly, homodimer. Mg(2+) serves as cofactor. Requires Mn(2+) as cofactor. Thiamine diphosphate is required as a cofactor.

The enzyme catalyses isochorismate + 2-oxoglutarate + H(+) = 5-enolpyruvoyl-6-hydroxy-2-succinyl-cyclohex-3-ene-1-carboxylate + CO2. It participates in quinol/quinone metabolism; 1,4-dihydroxy-2-naphthoate biosynthesis; 1,4-dihydroxy-2-naphthoate from chorismate: step 2/7. It functions in the pathway quinol/quinone metabolism; menaquinone biosynthesis. Catalyzes the thiamine diphosphate-dependent decarboxylation of 2-oxoglutarate and the subsequent addition of the resulting succinic semialdehyde-thiamine pyrophosphate anion to isochorismate to yield 2-succinyl-5-enolpyruvyl-6-hydroxy-3-cyclohexene-1-carboxylate (SEPHCHC). This chain is 2-succinyl-5-enolpyruvyl-6-hydroxy-3-cyclohexene-1-carboxylate synthase, found in Staphylococcus saprophyticus subsp. saprophyticus (strain ATCC 15305 / DSM 20229 / NCIMB 8711 / NCTC 7292 / S-41).